The following is a 349-amino-acid chain: tRNA pseudouridine synthase D (349 aa).

Phe27 provides a ligand contact to substrate. The Nucleophile role is filled by Asp80. Residue Asn129 participates in substrate binding. The TRUD domain maps to 155-303 (GVPNYFGAQR…VEASRRAMLL (149 aa)). Residue Phe329 coordinates substrate.

The protein belongs to the pseudouridine synthase TruD family.

The enzyme catalyses uridine(13) in tRNA = pseudouridine(13) in tRNA. Its function is as follows. Responsible for synthesis of pseudouridine from uracil-13 in transfer RNAs. This chain is tRNA pseudouridine synthase D, found in Salmonella choleraesuis (strain SC-B67).